The following is a 727-amino-acid chain: Glycerol-3-phosphate dehydrogenase, mitochondrial (727 aa).

The transit peptide at 1–42 (MAFQKAVKGTILVGGGALATVLGLSQFAHYRRKQMNLAYVKA) directs the protein to the mitochondrion. 71–99 (DILVIGGGATGSGCALDAVTRGLKTALVE) contacts FAD. The residue at position 601 (tyrosine 601) is a Phosphotyrosine. EF-hand domains follow at residues 623–658 (SDID…INVQ) and 659–694 (MDEN…IQKG). 5 residues coordinate Ca(2+): aspartate 672, asparagine 674, asparagine 676, glutamine 678, and glutamate 683.

This sequence belongs to the FAD-dependent glycerol-3-phosphate dehydrogenase family. FAD is required as a cofactor.

It is found in the mitochondrion. The enzyme catalyses a quinone + sn-glycerol 3-phosphate = dihydroxyacetone phosphate + a quinol. It functions in the pathway polyol metabolism; glycerol degradation via glycerol kinase pathway; glycerone phosphate from sn-glycerol 3-phosphate (aerobic route): step 1/1. Its activity is regulated as follows. Calcium-binding enhance the activity of the enzyme. In terms of biological role, calcium-responsive mitochondrial glycerol-3-phosphate dehydrogenase which seems to be a key component of the pancreatic beta-cell glucose-sensing device. The protein is Glycerol-3-phosphate dehydrogenase, mitochondrial (GPD2) of Macaca fascicularis (Crab-eating macaque).